The chain runs to 270 residues: Small ribosomal subunit protein eS1 (270 aa).

Disordered stretches follow at residues 1-20 (MAVG…SKKK) and 238-270 (GGGK…QESV).

The protein belongs to the eukaryotic ribosomal protein eS1 family. As to quaternary structure, component of the small ribosomal subunit. Mature ribosomes consist of a small (40S) and a large (60S) subunit. The 40S subunit contains about 33 different proteins and 1 molecule of RNA (18S). The 60S subunit contains about 49 different proteins and 3 molecules of RNA (28S, 5.8S and 5S).

The protein localises to the cytoplasm. This chain is Small ribosomal subunit protein eS1, found in Culex quinquefasciatus (Southern house mosquito).